We begin with the raw amino-acid sequence, 154 residues long: Large ribosomal subunit protein uL13 (154 aa).

It belongs to the universal ribosomal protein uL13 family. As to quaternary structure, part of the 50S ribosomal subunit.

Functionally, this protein is one of the early assembly proteins of the 50S ribosomal subunit, although it is not seen to bind rRNA by itself. It is important during the early stages of 50S assembly. This is Large ribosomal subunit protein uL13 from Sinorhizobium medicae (strain WSM419) (Ensifer medicae).